Reading from the N-terminus, the 278-residue chain is Formamidopyrimidine-DNA glycosylase (278 aa).

P2 functions as the Schiff-base intermediate with DNA in the catalytic mechanism. Catalysis depends on E3, which acts as the Proton donor. The active-site Proton donor; for beta-elimination activity is the K59. DNA is bound by residues H93, R112, and R153. The FPG-type zinc finger occupies 238-272 (NVYDRAGEPCPRCQSTIERIVVAQRSTYFCPTCQI). Catalysis depends on R262, which acts as the Proton donor; for delta-elimination activity.

The protein belongs to the FPG family. In terms of assembly, monomer. Zn(2+) is required as a cofactor.

It carries out the reaction Hydrolysis of DNA containing ring-opened 7-methylguanine residues, releasing 2,6-diamino-4-hydroxy-5-(N-methyl)formamidopyrimidine.. The enzyme catalyses 2'-deoxyribonucleotide-(2'-deoxyribose 5'-phosphate)-2'-deoxyribonucleotide-DNA = a 3'-end 2'-deoxyribonucleotide-(2,3-dehydro-2,3-deoxyribose 5'-phosphate)-DNA + a 5'-end 5'-phospho-2'-deoxyribonucleoside-DNA + H(+). Functionally, involved in base excision repair of DNA damaged by oxidation or by mutagenic agents. Acts as a DNA glycosylase that recognizes and removes damaged bases. Has a preference for oxidized purines, such as 7,8-dihydro-8-oxoguanine (8-oxoG). Has AP (apurinic/apyrimidinic) lyase activity and introduces nicks in the DNA strand. Cleaves the DNA backbone by beta-delta elimination to generate a single-strand break at the site of the removed base with both 3'- and 5'-phosphates. This Chloroflexus aurantiacus (strain ATCC 29366 / DSM 635 / J-10-fl) protein is Formamidopyrimidine-DNA glycosylase.